A 34-amino-acid polypeptide reads, in one-letter code: Photosystem I reaction center subunit XII (34 aa).

A helical membrane pass occupies residues 9–29; it reads LIILGLIVVMHAGVLALRLGI.

Belongs to the PsaM family.

It is found in the cellular thylakoid membrane. This Prochlorococcus marinus subsp. pastoris (strain CCMP1986 / NIES-2087 / MED4) protein is Photosystem I reaction center subunit XII.